Consider the following 314-residue polypeptide: Acetaldehyde dehydrogenase (314 aa).

14–17 (SGNI) is a binding site for NAD(+). Cysteine 132 functions as the Acyl-thioester intermediate in the catalytic mechanism. NAD(+) is bound by residues 163–171 (SAGPGTRAN) and asparagine 291.

The protein belongs to the acetaldehyde dehydrogenase family.

The enzyme catalyses acetaldehyde + NAD(+) + CoA = acetyl-CoA + NADH + H(+). The chain is Acetaldehyde dehydrogenase from Polaromonas sp. (strain JS666 / ATCC BAA-500).